The primary structure comprises 433 residues: Serine hydroxymethyltransferase (433 aa).

(6S)-5,6,7,8-tetrahydrofolate contacts are provided by residues L132 and 136–138 (GHL). The residue at position 241 (K241) is an N6-(pyridoxal phosphate)lysine.

It belongs to the SHMT family. As to quaternary structure, homodimer. Requires pyridoxal 5'-phosphate as cofactor.

The protein resides in the cytoplasm. It carries out the reaction (6R)-5,10-methylene-5,6,7,8-tetrahydrofolate + glycine + H2O = (6S)-5,6,7,8-tetrahydrofolate + L-serine. It functions in the pathway one-carbon metabolism; tetrahydrofolate interconversion. It participates in amino-acid biosynthesis; glycine biosynthesis; glycine from L-serine: step 1/1. In terms of biological role, catalyzes the reversible interconversion of serine and glycine with tetrahydrofolate (THF) serving as the one-carbon carrier. This reaction serves as the major source of one-carbon groups required for the biosynthesis of purines, thymidylate, methionine, and other important biomolecules. Also exhibits THF-independent aldolase activity toward beta-hydroxyamino acids, producing glycine and aldehydes, via a retro-aldol mechanism. This chain is Serine hydroxymethyltransferase, found in Nitrobacter winogradskyi (strain ATCC 25391 / DSM 10237 / CIP 104748 / NCIMB 11846 / Nb-255).